Reading from the N-terminus, the 764-residue chain is MGSNLSPQLCLMPFILGLLSGGVTTTPWPLAQPQESCSLEGVEIKGGSFRLLQEGQALEYVCPSGFYPYPVQTRTCRSTGSWSTLKTQVQKTVRKAECRAIHCPRPHDFENGEYWPRSPYYNVSDEISFHCYDGYTLRGSANRTCQVNGRWSGQTAICDNGAGYCSNPGIPIGTRKVGSQYRLEDSVTYHCSRGLTLRGSQRRTCQEGGSWSGTEPSCQDSFMYDTPQEVAEAFLSSLTETIEGVDAEDGHGPGEQQKRKIVLDPSGSMNIYLVLDGSDSIGASNFTGAKKCLVNLIEKVASYGVKPRYGLVTYATHPKIWVKVSDPDSSNADWVTKQLNEINYEDHKLKSGTNTKKALQAVYSMMSWPDDIPPEGWNRTRHVIILMTDGLHNMGGDPITVIDEIRDLLYIGKDRKNPREDYLDVYVFGVGPLVNQVNINALASKKDNEQHVFKVKDMENLEDVFYQMIDESQSLSLCGMVWEHRKGTDYHKQPWQAKISVIRPSKGHESCMGAVVSEYFVLTAAHCFTVDDKEHSIKVSVGGEKRDLEIEVVLFHPNYNINGKKAAGIPEFYDYDVALIKLKNKLKYGQTIRPICLPCTEGTTRALRLPPTTTCQQQKEELLPAQDIKALFVSEEEKKLTRKEVYIKNGDKKGSCERDAQYAPGYDKVKDISEVVTPRFLCTGGVSPYADPNTCRGDSGGPLIVHKRSRFIQVGVISWGVVDVCKNQKRQKQVPAHARDFHINLFQVLPWLKEKLQDEDLGFL.

Positions 1-25 (MGSNLSPQLCLMPFILGLLSGGVTT) are cleaved as a signal peptide. Sushi domains follow at residues 35–100 (ESCS…ECRA), 101–160 (IHCP…ICDN), and 163–220 (GYCS…SCQD). Cystine bridges form between cysteine 37–cysteine 76, cysteine 62–cysteine 98, cysteine 103–cysteine 145, cysteine 131–cysteine 158, cysteine 165–cysteine 205, and cysteine 191–cysteine 218. 2 N-linked (GlcNAc...) asparagine glycosylation sites follow: asparagine 122 and asparagine 142. One can recognise a VWFA domain in the interval 270–469 (NIYLVLDGSD…NLEDVFYQMI (200 aa)). Residues serine 278 and serine 280 each contribute to the Mg(2+) site. N-linked (GlcNAc...) asparagine glycosylation occurs at asparagine 285. Threonine 353 is a Mg(2+) binding site. An N-linked (GlcNAc...) asparagine glycan is attached at asparagine 378. Residues 477–757 (LCGMVWEHRK…VLPWLKEKLQ (281 aa)) form the Peptidase S1 domain. 5 cysteine pairs are disulfide-bonded: cysteine 478-cysteine 596, cysteine 511-cysteine 527, cysteine 599-cysteine 615, cysteine 656-cysteine 682, and cysteine 695-cysteine 725. Residues histidine 526 and aspartate 576 each act as charge relay system in the active site. Serine 699 functions as the Charge relay system in the catalytic mechanism.

This sequence belongs to the peptidase S1 family. As to quaternary structure, monomer. Interacts with complement C3b; this interaction is dependent on the presence of Mg(2+). Catalytic component of the C3 convertase of the alternative complement pathway, also named C3bBb, composed of complement factor B Bb and complement C3b. Catalytic component of the C5 convertase of the alternative complement pathway, also named C3bBb3b, composed of complement factor B Bb and additional molecules of complement C3b. Interacts to CFP; this interaction contributes to the stabilization of the active C3-convertase enzyme complex. Mg(2+) serves as cofactor. It depends on Mn(2+) as a cofactor. Cleaved by CFD following activation of the alternative complement system, generating Ba and Bb chains. Cleavage and activation takes place when CFB is already associated with complement C3b.

Its subcellular location is the secreted. It is found in the cell surface. The catalysed reaction is Cleavage of Arg-|-Ser bond in complement component C3 alpha-chain to yield C3a and C3b, and Arg-|-Xaa bond in complement component C5 alpha-chain to yield C5a and C5b.. In terms of biological role, precursor of the catalytic component of the C3 and C5 convertase complexes of the alternative pathway of the complement system, a cascade of proteins that leads to phagocytosis and breakdown of pathogens and signaling that strengthens the adaptive immune system. The alternative complement pathway acts as an amplification loop that enhances other complement pathways (classical, lectin and GZMK) by promoting formation of additional C3 and C5 convertases. CFB is cleaved and activated by CFD to generate Ba and Bb chains; Bb chain constituting the catalytic component of the C3 and C5 convertases. Its function is as follows. Serine protease component of the complement C3 and C5 convertase complexes of the alternative complement pathway. Following cleavage and activation by factor D (CFD), forms the C3 convertase together with complement C3b. As part of the C3 convertase, cleaves and activates C3 into C3a anaphylatoxin and C3b opsonin, the next components of the complement pathways. When an additional complement C3b molecule binds to the C3 convertase, forms the C5 convertase, which cleaves and activates C5 into C5a anaphylatoxin and C5b component of the membrane attack complex. Involved in proliferation and differentiation of preactivated B-lymphocytes, rapid spreading of peripheral blood monocytes, stimulation of lymphocyte blastogenesis and lysis of erythrocytes. This chain is Complement factor B (CFB), found in Pan troglodytes (Chimpanzee).